Reading from the N-terminus, the 230-residue chain is Acyl-protein thioesterase 1 (230 aa).

Residues S119, D174, and H208 each act as charge relay system in the active site. K224 bears the N6-acetyllysine mark.

This sequence belongs to the AB hydrolase superfamily. AB hydrolase 2 family. As to quaternary structure, homodimer. In terms of tissue distribution, platelets.

The protein localises to the cytoplasm. The protein resides in the cell membrane. Its subcellular location is the nucleus membrane. It is found in the endoplasmic reticulum. It catalyses the reaction S-hexadecanoyl-L-cysteinyl-[protein] + H2O = L-cysteinyl-[protein] + hexadecanoate + H(+). The enzyme catalyses 1-hexadecanoyl-sn-glycero-3-phosphocholine + H2O = sn-glycerol 3-phosphocholine + hexadecanoate + H(+). The catalysed reaction is a 1-(9Z-octadecenoyl)-2-acyl-sn-glycero-3-phosphocholine + H2O = a 2-acyl-sn-glycero-3-phosphocholine + (9Z)-octadecenoate + H(+). With respect to regulation, inhibited by palmostatin-B, leading to impair depalmitoylating of Ras. Its function is as follows. Acts as an acyl-protein thioesterase. Hydrolyzes fatty acids from S-acylated cysteine residues in proteins such as trimeric G alpha proteins or HRAS. Acts as a palmitoyl thioesterase that catalyzes depalmitoylation of proteins, such as ADRB2, KCNMA1 and SQSTM1. Acts as a negative regulator of autophagy by mediating palmitoylation of SQSTM1, decreasing affinity between SQSTM1 and ATG8 proteins and recruitment of ubiquitinated cargo proteins to autophagosomes. Acts as a lysophospholipase and hydrolyzes lysophosphatidylcholine (lyso-PC). Also hydrolyzes lysophosphatidylethanolamine (lyso-PE), lysophosphatidylinositol (lyso-PI) and lysophosphatidylserine (lyso-PS). Has much higher thioesterase activity than lysophospholipase activity. Contributes to the production of lysophosphatidic acid (LPA) during blood coagulation by recognizing and cleaving plasma phospholipids to generate lysophospholipids which in turn act as substrates for ENPP2 to produce LPA. This chain is Acyl-protein thioesterase 1 (LYPLA1), found in Homo sapiens (Human).